The primary structure comprises 635 residues: Threonine--tRNA ligase (635 aa).

Residues 1 to 62 form the TGS domain; it reads MITITLPDGS…EHDAILRIIT (62 aa). Positions 244–535 are catalytic; it reads DHRKIGKAQD…LIEHYAGIWP (292 aa). Zn(2+) contacts are provided by cysteine 335, histidine 386, and histidine 512.

It belongs to the class-II aminoacyl-tRNA synthetase family. Homodimer. Zn(2+) serves as cofactor.

The protein localises to the cytoplasm. It catalyses the reaction tRNA(Thr) + L-threonine + ATP = L-threonyl-tRNA(Thr) + AMP + diphosphate + H(+). Its function is as follows. Catalyzes the attachment of threonine to tRNA(Thr) in a two-step reaction: L-threonine is first activated by ATP to form Thr-AMP and then transferred to the acceptor end of tRNA(Thr). Also edits incorrectly charged L-seryl-tRNA(Thr). The protein is Threonine--tRNA ligase of Xylella fastidiosa (strain M23).